Consider the following 73-residue polypeptide: Kazal peptide Pr13a (73 aa).

An N-terminal signal peptide occupies residues 1-20 (MKYIILFLVLIGLQANLALG). Positions 21–73 (SKCKCDCTKYPYSPVCAKELKTGDTETFNNVCQLQCYNCTHMKNYVVIYSGSC) constitute a Kazal-like domain. 3 disulfides stabilise this stretch: C23–C59, C27–C52, and C36–C73.

As to expression, expressed by the venom gland (anterior main gland) (at protein level).

The protein localises to the secreted. Its function is as follows. May act as a serine protease inhibitor, since it possess the kazal serine protease inhibitor signature. The sequence is that of Kazal peptide Pr13a from Platymeris rhadamanthus (Red spot assassin bug).